A 166-amino-acid chain; its full sequence is Ubiquitin-conjugating enzyme E2-18 kDa (166 aa).

One can recognise a UBC core domain in the interval 5–165; sequence MALRRLMKEY…VRRLARKTLG (161 aa). Catalysis depends on cysteine 90, which acts as the Glycyl thioester intermediate. Cysteine 90 participates in a covalent cross-link: Glycyl cysteine thioester (Cys-Gly) (interchain with G-Cter in ubiquitin).

Belongs to the ubiquitin-conjugating enzyme family. Autoubiquitinated at Cys-90; undergoes 'Lys-48'-linked polyubiquitination, which leads to proteasome-dependent protein degradation.

The enzyme catalyses S-ubiquitinyl-[E1 ubiquitin-activating enzyme]-L-cysteine + [E2 ubiquitin-conjugating enzyme]-L-cysteine = [E1 ubiquitin-activating enzyme]-L-cysteine + S-ubiquitinyl-[E2 ubiquitin-conjugating enzyme]-L-cysteine.. It functions in the pathway protein modification; protein ubiquitination. Catalyzes the covalent attachment of ubiquitin to other proteins. Functions in degradation of misfolded or regulated proteins localized in the endoplasmic reticulum (ER) lumen or membrane via the ubiquitin-proteasome system. Cognate E2 conjugating enzyme for the doa10 ubiquitin ligase complex, which is part of the ERAD-C pathway responsible for the rapid degradation of membrane proteins with misfolded cytoplasmic domains, and of the hrd1 ubiquitin ligase complex, which is part of the ERAD-L and ERAD-M pathways responsible for the rapid degradation of soluble lumenal and membrane proteins with misfolded lumenal domains (ERAD-L), or ER-membrane proteins with misfolded transmembrane domains (ERAD-M). Together with hrd1, required for the degradation of the transcription factor sre1 precursor in the absence of its binding partner scp1. Has a role in the formation of chromatin structures that influence the localization of transcriptional silencing factors. The polypeptide is Ubiquitin-conjugating enzyme E2-18 kDa (ubc7) (Schizosaccharomyces pombe (strain 972 / ATCC 24843) (Fission yeast)).